A 219-amino-acid chain; its full sequence is Carboxypeptidase Y inhibitor (219 aa).

Residue Met1 is modified to N-acetylmethionine.

It belongs to the phosphatidylethanolamine-binding protein family. Monomer.

The protein resides in the cytoplasm. Its function is as follows. Specific and potent inhibitor of carboxypeptidase Y. This Saccharomyces cerevisiae (strain ATCC 204508 / S288c) (Baker's yeast) protein is Carboxypeptidase Y inhibitor (TFS1).